Consider the following 607-residue polypeptide: DNA mismatch repair protein MutL (607 aa).

Belongs to the DNA mismatch repair MutL/HexB family.

This protein is involved in the repair of mismatches in DNA. It is required for dam-dependent methyl-directed DNA mismatch repair. May act as a 'molecular matchmaker', a protein that promotes the formation of a stable complex between two or more DNA-binding proteins in an ATP-dependent manner without itself being part of a final effector complex. This Paramagnetospirillum magneticum (strain ATCC 700264 / AMB-1) (Magnetospirillum magneticum) protein is DNA mismatch repair protein MutL.